Here is a 190-residue protein sequence, read N- to C-terminus: CDP-diacylglycerol--glycerol-3-phosphate 3-phosphatidyltransferase (190 aa).

Topologically, residues 6–17 (GVFNIPMYLTLF) are cytoplasmic. The chain crosses the membrane as a helical span at residues 18-42 (RIIMVPCFVAVFYWPIYWSPMLCTL). The Periplasmic segment spans residues 43–65 (IFFIAAITDWFDGFLARRWNQTS). A helical membrane pass occupies residues 66–86 (RIGGFLDPIADKIMIITALIL). Over 87 to 91 (ISEHF) the chain is Cytoplasmic. The chain crosses the membrane as a helical span at residues 92–112 (HVWWMTLPISSIIIREILISS). The Periplasmic portion of the chain corresponds to 113-150 (LRECIARVDNKNNISVIWLSKVKTFAQMLALIALLCRL). Residues 151-173 (NEWTVIMGVISLYTAMLLTLWSM) form a helical membrane-spanning segment. Topologically, residues 174-186 (CYYVYSVSSILLQ) are cytoplasmic.

It belongs to the CDP-alcohol phosphatidyltransferase class-I family.

It localises to the cell inner membrane. It catalyses the reaction a CDP-1,2-diacyl-sn-glycerol + sn-glycerol 3-phosphate = a 1,2-diacyl-sn-glycero-3-phospho-(1'-sn-glycero-3'-phosphate) + CMP + H(+). Its pathway is phospholipid metabolism; phosphatidylglycerol biosynthesis; phosphatidylglycerol from CDP-diacylglycerol: step 1/2. Catalyzes the conversion of cytidine diphosphate diacylglycerol (CDP-DG) and glycerol 3-phosphate into phosphatidylglycerol. Essential for the synthesis of anionic phospholipids, thereby playing a role in balancing the ratio of zwitterionic and anionic phospholipids, which is thought to be important for normal membrane function. In Blochmanniella floridana, this protein is CDP-diacylglycerol--glycerol-3-phosphate 3-phosphatidyltransferase.